A 169-amino-acid polypeptide reads, in one-letter code: Disulfide bond formation protein B 1 (169 aa).

At 1–13 (MSALLKPLDNRLF) the chain is on the cytoplasmic side. The chain crosses the membrane as a helical span at residues 14-30 (WPAVAIGGLLILAFVLY). The Periplasmic portion of the chain corresponds to 31–48 (LQHVRGFAPCSLCIFIRL). Cys-40 and Cys-43 are oxidised to a cystine. Residues 49–64 (DVLGLVLAGIVGSLAP) form a helical membrane-spanning segment. The Cytoplasmic portion of the chain corresponds to 65 to 71 (RSRIAGG). Residues 72–89 (IAALGMLAASLGGIYHAW) form a helical membrane-spanning segment. Topologically, residues 90–145 (SLVAEEKLAAQGMGSCKMFMGFPEWIPLDTWLPQVFQPEGLCGEVVWTLLGQSMAV) are periplasmic. A disulfide bond links Cys-105 and Cys-131. A helical transmembrane segment spans residues 146–164 (WSLALFVFCLLVLAAKLAF). Residues 165 to 169 (GRRTA) are Cytoplasmic-facing.

It belongs to the DsbB family.

Its subcellular location is the cell inner membrane. In terms of biological role, required for disulfide bond formation in some periplasmic proteins. Acts by oxidizing the DsbA protein. In Pseudomonas aeruginosa (strain UCBPP-PA14), this protein is Disulfide bond formation protein B 1.